We begin with the raw amino-acid sequence, 321 residues long: MTAQSQNIVETPSRVRAHALGVNAPELAKYQDEPAQMRSGAVGKSGYLKLRFAKREHRSILAEMERRVPSLVQKALYWDEEIPELPCVTMISTSGCILQGDRLATDVHVEAGACAHVTTQSATKVHMMNANYASQIQNFIVEEGGYLEFMPDPLIPHRNSRFITDTTISIHPTATAIYSEVLMSGRKYHHADERFGFDVYSSRVAAQNLAGKELFVEKYVLEPKVESLDAVGVMQTFDAFGNVILLTPKEHHDRILARVPAHFDIKGGIASGATRLPNDCGLVFKALGIDSAGVKAEIRQFWKIAREEILGVTLPEQFLWR.

This sequence belongs to the UreD family. In terms of assembly, ureD, UreF and UreG form a complex that acts as a GTP-hydrolysis-dependent molecular chaperone, activating the urease apoprotein by helping to assemble the nickel containing metallocenter of UreC. The UreE protein probably delivers the nickel.

Its subcellular location is the cytoplasm. In terms of biological role, required for maturation of urease via the functional incorporation of the urease nickel metallocenter. This chain is Urease accessory protein UreD, found in Yersinia pseudotuberculosis serotype O:1b (strain IP 31758).